Reading from the N-terminus, the 440-residue chain is Gap junction alpha-8 protein (440 aa).

An intramembrane segment occupies 2-12 (GDWSFLGNILE). Over 13–21 (EVNEHSTVI) the chain is Cytoplasmic. Residues 22–42 (GRVWLTVLFIFRILILGTAAE) traverse the membrane as a helical segment. The Extracellular portion of the chain corresponds to 43-71 (FVWGDEQSDFVCNTQQPGCENVCYDEAFP). Disulfide bonds link Cys54-Cys201, Cys61-Cys195, and Cys65-Cys190. A helical membrane pass occupies residues 72-92 (ISHIRLWVLQIIFVSTPSLVY). The Cytoplasmic portion of the chain corresponds to 93–161 (VGHAVHHVRM…GTLLRTYVCH (69 aa)). Residues 108–144 (EREAEELSQQSPGNGGERAPLAADQGSVKKSSSSSKG) are disordered. The helical transmembrane segment at 162-182 (IIFKTLFEVGFIVGHYFLYGF) threads the bilayer. Residues 183–210 (RILPLYRCSRWPCPNVVDCFVSRPTEKT) are Extracellular-facing. Residues 211–231 (IFILFMLSVASVSLFLNILEM) form a helical membrane-spanning segment. Topologically, residues 232-440 (SHLGLKKIRS…SRARSDDLTV (209 aa)) are cytoplasmic. The tract at residues 334–440 (GAQEGVEEEQ…SRARSDDLTV (107 aa)) is disordered. Basic and acidic residues-rich tracts occupy residues 353–365 (VGDKSQEAERVST) and 375–405 (EEEKVEPPEVEKEAEKEETPPEKVSKQELTP). The span at 423–432 (LSRLSKASSR) shows a compositional bias: low complexity.

It belongs to the connexin family. Alpha-type (group II) subfamily. As to quaternary structure, a hemichannel or connexon is composed of a hexamer of connexins. A functional gap junction is formed by the apposition of two hemichannels. Forms heteromeric channels with GJA3. In terms of tissue distribution, detected in eye lens (at protein level). Eye lens.

It localises to the cell membrane. Its subcellular location is the cell junction. The protein resides in the gap junction. Its function is as follows. Structural component of eye lens gap junctions. Gap junctions are dodecameric channels that connect the cytoplasm of adjoining cells. They are formed by the docking of two hexameric hemichannels, one from each cell membrane. Small molecules and ions diffuse from one cell to a neighboring cell via the central pore. This Ovis aries (Sheep) protein is Gap junction alpha-8 protein (GJA8).